We begin with the raw amino-acid sequence, 567 residues long: Urease subunit alpha (567 aa).

A Urease domain is found at 129–567; that stretch reads GGIDAHIHFI…LPLTQRYCLF (439 aa). Residues His134, His136, and Lys217 each coordinate Ni(2+). Lys217 carries the post-translational modification N6-carboxylysine. Residue His219 participates in substrate binding. The Ni(2+) site is built by His246 and His272. The Proton donor role is filled by His320. Asp360 serves as a coordination point for Ni(2+).

It belongs to the metallo-dependent hydrolases superfamily. Urease alpha subunit family. In terms of assembly, heterotrimer of UreA (gamma), UreB (beta) and UreC (alpha) subunits. Three heterotrimers associate to form the active enzyme. The cofactor is Ni cation. Post-translationally, carboxylation allows a single lysine to coordinate two nickel ions.

It is found in the cytoplasm. It catalyses the reaction urea + 2 H2O + H(+) = hydrogencarbonate + 2 NH4(+). The protein operates within nitrogen metabolism; urea degradation; CO(2) and NH(3) from urea (urease route): step 1/1. This Psychromonas ingrahamii (strain DSM 17664 / CCUG 51855 / 37) protein is Urease subunit alpha.